Here is a 208-residue protein sequence, read N- to C-terminus: uncharacterized protein (208 aa).

A compositionally biased stretch (basic and acidic residues) spans M1 to G18. 2 disordered regions span residues M1–P122 and R135–G208.

This is an uncharacterized protein from Homo sapiens (Human).